A 157-amino-acid polypeptide reads, in one-letter code: Nascent polypeptide-associated complex subunit beta (157 aa).

A disordered region spans residues 1 to 28 (MPVDPEKLAKLQKSSAKKVGGSRVKAKK). One can recognise an NAC-A/B domain in the interval 33-98 (EQDDTKLIEA…PQEKNITQLI (66 aa)). A disordered region spans residues 124–157 (KTPKDFNTGSANAAADAGGEDIPDLVDQKFDDVE).

It belongs to the NAC-beta family. In terms of assembly, part of the nascent polypeptide-associated complex (NAC), consisting of EGD2 and EGD1. NAC associates with ribosomes via EGD1.

Its subcellular location is the cytoplasm. It is found in the nucleus. In terms of biological role, component of the nascent polypeptide-associated complex (NAC), a dynamic component of the ribosomal exit tunnel, protecting the emerging polypeptides from interaction with other cytoplasmic proteins to ensure appropriate nascent protein targeting. The NAC complex also promotes mitochondrial protein import by enhancing productive ribosome interactions with the outer mitochondrial membrane and blocks the inappropriate interaction of ribosomes translating non-secretory nascent polypeptides with translocation sites in the membrane of the endoplasmic reticulum. EGD1 may act as a transcription factor that exert a negative effect on the expression of several genes that are transcribed by RNA polymerase II. In Candida albicans (strain SC5314 / ATCC MYA-2876) (Yeast), this protein is Nascent polypeptide-associated complex subunit beta (EGD1).